The primary structure comprises 473 residues: ATP synthase subunit beta, chloroplastic (473 aa).

Residue 172-179 coordinates ATP; the sequence is GGAGVGKT.

The protein belongs to the ATPase alpha/beta chains family. In terms of assembly, F-type ATPases have 2 components, CF(1) - the catalytic core - and CF(0) - the membrane proton channel. CF(1) has five subunits: alpha(3), beta(3), gamma(1), delta(1), epsilon(1). CF(0) has four main subunits: a(1), b(1), b'(1) and c(9-12).

Its subcellular location is the plastid. The protein localises to the chloroplast thylakoid membrane. It carries out the reaction ATP + H2O + 4 H(+)(in) = ADP + phosphate + 5 H(+)(out). Functionally, produces ATP from ADP in the presence of a proton gradient across the membrane. The catalytic sites are hosted primarily by the beta subunits. In Equisetum arvense (Field horsetail), this protein is ATP synthase subunit beta, chloroplastic.